The primary structure comprises 171 residues: ATP synthase subunit b (171 aa).

A helical transmembrane segment spans residues 14 to 34; sequence LGDMLFIGISFIVLMALISVV. The segment covering 56-97 has biased composition (basic and acidic residues); sequence SAQKSRQEASDLADQRRDALSHSRAEASEIVADAKKSGEKQR. The segment at 56-104 is disordered; that stretch reads SAQKSRQEASDLADQRRDALSHSRAEASEIVADAKKSGEKQRSSIVADA.

It belongs to the ATPase B chain family. As to quaternary structure, F-type ATPases have 2 components, F(1) - the catalytic core - and F(0) - the membrane proton channel. F(1) has five subunits: alpha(3), beta(3), gamma(1), delta(1), epsilon(1). F(0) has three main subunits: a(1), b(2) and c(10-14). The alpha and beta chains form an alternating ring which encloses part of the gamma chain. F(1) is attached to F(0) by a central stalk formed by the gamma and epsilon chains, while a peripheral stalk is formed by the delta and b chains.

The protein resides in the cell membrane. Functionally, f(1)F(0) ATP synthase produces ATP from ADP in the presence of a proton or sodium gradient. F-type ATPases consist of two structural domains, F(1) containing the extramembraneous catalytic core and F(0) containing the membrane proton channel, linked together by a central stalk and a peripheral stalk. During catalysis, ATP synthesis in the catalytic domain of F(1) is coupled via a rotary mechanism of the central stalk subunits to proton translocation. In terms of biological role, component of the F(0) channel, it forms part of the peripheral stalk, linking F(1) to F(0). This Lactiplantibacillus plantarum (strain ATCC BAA-793 / NCIMB 8826 / WCFS1) (Lactobacillus plantarum) protein is ATP synthase subunit b.